A 177-amino-acid chain; its full sequence is Large ribosomal subunit protein uL6 (177 aa).

The protein belongs to the universal ribosomal protein uL6 family. Part of the 50S ribosomal subunit.

This protein binds to the 23S rRNA, and is important in its secondary structure. It is located near the subunit interface in the base of the L7/L12 stalk, and near the tRNA binding site of the peptidyltransferase center. The sequence is that of Large ribosomal subunit protein uL6 from Vibrio cholerae serotype O1 (strain ATCC 39541 / Classical Ogawa 395 / O395).